The sequence spans 145 residues: Bacilliredoxin GK2368 (145 aa).

This sequence belongs to the bacilliredoxin family.

The polypeptide is Bacilliredoxin GK2368 (Geobacillus kaustophilus (strain HTA426)).